The following is a 186-amino-acid chain: Casparian strip membrane protein 3 (186 aa).

Residues 1–26 (MKAGALELGEGSKTSIPRGGVNRGIS) are Cytoplasmic-facing. The helical transmembrane segment at 27–47 (ILDFILRLITIIGTLGSAIAM) threads the bilayer. The Extracellular portion of the chain corresponds to 48–74 (GTTNETLPFFTQFTQFRAEYDDLPTFT). N51 carries N-linked (GlcNAc...) asparagine glycosylation. Residues 75-95 (FFVIANSIVSGYLVLSLPMSI) traverse the membrane as a helical segment. The Cytoplasmic portion of the chain corresponds to 96–107 (LHIVRSGARASR). A helical membrane pass occupies residues 108–128 (IVLIFFDTAMLALLTAAASAA). At 129–161 (SAIVYLAHKGNAQANWFAICQQFKSFCERISGS) the chain is on the extracellular side. Residues 162 to 182 (LIGSFGGIILFILLVLLSAVA) form a helical membrane-spanning segment. At 183–186 (LSRC) the chain is on the cytoplasmic side.

The protein belongs to the Casparian strip membrane proteins (CASP) family. In terms of assembly, homodimer and heterodimers.

Its subcellular location is the cell membrane. In terms of biological role, regulates membrane-cell wall junctions and localized cell wall deposition. Required for establishment of the Casparian strip membrane domain (CSD) and the subsequent formation of Casparian strips, a cell wall modification of the root endodermis that determines an apoplastic barrier between the intraorganismal apoplasm and the extraorganismal apoplasm and prevents lateral diffusion. The chain is Casparian strip membrane protein 3 from Vitis vinifera (Grape).